A 167-amino-acid chain; its full sequence is Crossover junction endodeoxyribonuclease RuvC (167 aa).

Residues Asp-7, Glu-67, and Asp-140 contribute to the active site. Asp-7, Glu-67, and Asp-140 together coordinate Mg(2+).

This sequence belongs to the RuvC family. Homodimer which binds Holliday junction (HJ) DNA. The HJ becomes 2-fold symmetrical on binding to RuvC with unstacked arms; it has a different conformation from HJ DNA in complex with RuvA. In the full resolvosome a probable DNA-RuvA(4)-RuvB(12)-RuvC(2) complex forms which resolves the HJ. The cofactor is Mg(2+).

The protein resides in the cytoplasm. The catalysed reaction is Endonucleolytic cleavage at a junction such as a reciprocal single-stranded crossover between two homologous DNA duplexes (Holliday junction).. Its function is as follows. The RuvA-RuvB-RuvC complex processes Holliday junction (HJ) DNA during genetic recombination and DNA repair. Endonuclease that resolves HJ intermediates. Cleaves cruciform DNA by making single-stranded nicks across the HJ at symmetrical positions within the homologous arms, yielding a 5'-phosphate and a 3'-hydroxyl group; requires a central core of homology in the junction. The consensus cleavage sequence is 5'-(A/T)TT(C/G)-3'. Cleavage occurs on the 3'-side of the TT dinucleotide at the point of strand exchange. HJ branch migration catalyzed by RuvA-RuvB allows RuvC to scan DNA until it finds its consensus sequence, where it cleaves and resolves the cruciform DNA. This is Crossover junction endodeoxyribonuclease RuvC from Dehalococcoides mccartyi (strain ATCC BAA-2100 / JCM 16839 / KCTC 5957 / BAV1).